Here is a 555-residue protein sequence, read N- to C-terminus: 2-isopropylmalate synthase (555 aa).

The 274-residue stretch at 30-303 (PIWCSVDLRD…DPGLDCTDIN (274 aa)) folds into the Pyruvate carboxyltransferase domain. 4 residues coordinate Mg(2+): Asp39, His242, His244, and Asn278. Residues 437–555 (QPDARIKFVD…VSAANRVIAK (119 aa)) are regulatory domain.

It belongs to the alpha-IPM synthase/homocitrate synthase family. LeuA type 2 subfamily. In terms of assembly, homodimer. Mg(2+) serves as cofactor.

Its subcellular location is the cytoplasm. The enzyme catalyses 3-methyl-2-oxobutanoate + acetyl-CoA + H2O = (2S)-2-isopropylmalate + CoA + H(+). Its pathway is amino-acid biosynthesis; L-leucine biosynthesis; L-leucine from 3-methyl-2-oxobutanoate: step 1/4. Catalyzes the condensation of the acetyl group of acetyl-CoA with 3-methyl-2-oxobutanoate (2-ketoisovalerate) to form 3-carboxy-3-hydroxy-4-methylpentanoate (2-isopropylmalate). This is 2-isopropylmalate synthase from Brucella suis biovar 1 (strain 1330).